The following is a 199-amino-acid chain: MSTFTRLIAATSSTFPRQCLTGGVLFATGDTIAQQLVEKRGSRHDLARTFRLSLYGGCVFSPLASIWFGRVLERVRFSSKAANIATKVALDQAIASPAFVALFFGATTIMEGGSPDQAKNKIIHNWWPTLKTAWGLWIPVQTLNMALVPPSQRLLFVNVVSIFWNTFLSIKSAAASDHAVKPNLNDAVELVETKLDKLH.

4 consecutive transmembrane segments (helical) span residues 52–72 (LSLYGGCVFSPLASIWFGRVL), 93–113 (AIASPAFVALFFGATTIMEGG), 130–150 (LKTAWGLWIPVQTLNMALVPP), and 154–174 (LLFVNVVSIFWNTFLSIKSAA).

It belongs to the peroxisomal membrane protein PXMP2/4 family.

The protein localises to the mitochondrion inner membrane. Its function is as follows. May be involved in cellular response to stress. Required to maintain mitochondrial DNA (mtDNA) integrity and stability. In Mycosarcoma maydis (Corn smut fungus), this protein is Protein SYM1 (SYM1).